A 268-amino-acid chain; its full sequence is Microtubule-associated protein RP/EB family member 1 (268 aa).

N-acetylalanine is present on Ala2. The 103-residue stretch at 14–116 folds into the Calponin-homology (CH) domain; sequence NLSRHDMLAW…FVQWFKKFFD (103 aa). Lys66 bears the N6-crotonyllysine mark. Residue Tyr124 is modified to Phosphotyrosine. Residues 124-268 form an interaction with MTUS2/TIP150 region; that stretch reads YDPVAARQGQ…GGPQEEQEEY (145 aa). Low complexity predominate over residues 147 to 160; the sequence is NKPKKPLSSSSAAP. The segment at 147–184 is disordered; sequence NKPKKPLSSSSAAPQRPITTHRTTATPKAGPGVVRKNP. Ser155 bears the Phosphoserine mark. A compositionally biased stretch (polar residues) spans 163-172; that stretch reads PITTHRTTAT. An EB1 C-terminal domain is found at 185–255; that stretch reads GVGNGDDEAA…LYATDEGFVI (71 aa). The segment at 185–268 is interaction with CDK5RAP2; sequence GVGNGDDEAA…GGPQEEQEEY (84 aa). The tract at residues 206–211 is interaction with APC; the sequence is TVEDLE. Residues 208-268 are DCTN1-binding; it reads EDLEKERDFY…GGPQEEQEEY (61 aa). Lys220 is modified (N6-acetyllysine). An APC-binding region spans residues 220–242; the sequence is KLRNIELICQENEGENNPVLQRI. Positions 232–255 are interaction with SKA1; that stretch reads EGENNPVLQRIVDILYATDEGFVI.

Belongs to the MAPRE family. As to quaternary structure, homodimer. Heterodimer with MAPRE3. Interacts with DCTN1, DCTN2, TERF1 and dynein intermediate chain. Interaction with DIAPH1 and DIAPH2. Interacts (via C-terminal residues 206-211) with APC (via C-terminal residues 2674-2845); the interaction inhibits association with and bundling of F-actin. Interacts with CLASP2, DST, KIF2C and STIM1; probably required for their targeting to the growing microtubule plus ends. Interacts with MTUS2; interaction is direct and probably targets MTUS2 to microtubules. Interacts (via C-terminus) with SKA1 (via SXIP motif); the interaction is direct and stabilizes the kinetochore-microtubule attachment of the SKA1 complex. Interacts with APC2. Interacts with CLASP1. Interacts with CDK5RAP2. Interacts with MACF1. Interacts with RABL2/RABL2A; binds preferentially to GTP-bound RABL2. Interacts with KCNAB2. Interacts (via C-terminus) with CLIP1. Interacts with SLAIN2 and SLAIN1. Interacts with KIF18B; this interaction is required for efficient accumulation of KIF18B at microtubule plus ends. Interacts with MISP. Interacts with KNSTRN. Interacts with NCKAP5L. Interacts with CAMSAP2. Interacts with PDE4DIP isoform 13/MMG8/SMYLE; this interaction is required for its recruitment to the Golgi apparatus. Forms a pericentrosomal complex with AKAP9, CDK5RAP2 and PDE4DIP isoform 13/MMG8/SMYLE; within this complex, MAPRE1 binding to CDK5RAP2 may be mediated by PDE4DIP. Interacts with AKNA. Interacts with GAS2L1, GAS2L2, and GAS2L3. Post-translationally, acetylation at Lys-220 by KAT2B/PCAF promotes dynamic kinetochore-microtubule interactions in early mitosis. Crotonylated by KAT5 during mitosis, promoting astral microtubule plasticity and dynamic connection between astral microtubules and the cortex during mitotic chromosome segregation, thereby ensuring accurate spindle positioning in mitosis. Decrotonylated by HDAC3.

The protein localises to the cytoplasm. It is found in the cytoskeleton. It localises to the microtubule organizing center. Its subcellular location is the centrosome. The protein resides in the golgi apparatus. The protein localises to the spindle. It is found in the spindle pole. Functionally, plus-end tracking protein (+TIP) that binds to the plus-end of microtubules and regulates the dynamics of the microtubule cytoskeleton. Recruits other +TIP proteins to microtubules by binding to a conserved Ser-X-Leu-Pro (SXLP) motif in their polypeptide chains. Promotes cytoplasmic microtubule nucleation and elongation. Involved in mitotic spindle positioning by stabilizing microtubules and promoting dynamic connection between astral microtubules and the cortex during mitotic chromosome segregation. Assists chromosome alignment in metaphase by recruiting the SKA complex to the spindle and stabilizing its interactions with microtubule bundles (K-fibers). Also acts as a regulator of minus-end microtubule organization: interacts with the complex formed by AKAP9 and PDE4DIP, leading to recruit CAMSAP2 to the Golgi apparatus, thereby tethering non-centrosomal minus-end microtubules to the Golgi, an important step for polarized cell movement. Promotes elongation of CAMSAP2-decorated microtubule stretches on the minus-end of microtubules. Acts as a regulator of autophagosome transport via interaction with CAMSAP2. Functions downstream of Rho GTPases and DIAPH1 in stable microtubule formation. May play a role in cell migration. The polypeptide is Microtubule-associated protein RP/EB family member 1 (MAPRE1) (Bos taurus (Bovine)).